Here is a 226-residue protein sequence, read N- to C-terminus: Leucyl/phenylalanyl-tRNA--protein transferase (226 aa).

Belongs to the L/F-transferase family.

The protein resides in the cytoplasm. It carries out the reaction N-terminal L-lysyl-[protein] + L-leucyl-tRNA(Leu) = N-terminal L-leucyl-L-lysyl-[protein] + tRNA(Leu) + H(+). The catalysed reaction is N-terminal L-arginyl-[protein] + L-leucyl-tRNA(Leu) = N-terminal L-leucyl-L-arginyl-[protein] + tRNA(Leu) + H(+). It catalyses the reaction L-phenylalanyl-tRNA(Phe) + an N-terminal L-alpha-aminoacyl-[protein] = an N-terminal L-phenylalanyl-L-alpha-aminoacyl-[protein] + tRNA(Phe). Functionally, functions in the N-end rule pathway of protein degradation where it conjugates Leu, Phe and, less efficiently, Met from aminoacyl-tRNAs to the N-termini of proteins containing an N-terminal arginine or lysine. The polypeptide is Leucyl/phenylalanyl-tRNA--protein transferase (Pseudomonas paraeruginosa (strain DSM 24068 / PA7) (Pseudomonas aeruginosa (strain PA7))).